The following is a 695-amino-acid chain: UvrABC system protein C (695 aa).

The span at 1 to 10 (MNHDPAETRD) shows a compositional bias: basic and acidic residues. Positions 1–44 (MNHDPAETRDTAAAPLADTESPSPVSPELTPHPAPAAQDIDTAT) are disordered. Residues 88-166 (TSPGVYRMLN…IKQLRPRFNV (79 aa)) form the GIY-YIG domain. The UVR domain occupies 276–311 (RAVKQELAVEMEKASNELEFETAALYRDRLAALSAI).

Belongs to the UvrC family. As to quaternary structure, interacts with UvrB in an incision complex.

The protein resides in the cytoplasm. Its function is as follows. The UvrABC repair system catalyzes the recognition and processing of DNA lesions. UvrC both incises the 5' and 3' sides of the lesion. The N-terminal half is responsible for the 3' incision and the C-terminal half is responsible for the 5' incision. The protein is UvrABC system protein C of Rhodopseudomonas palustris (strain HaA2).